Reading from the N-terminus, the 192-residue chain is uncharacterized protein (192 aa).

2 disordered regions span residues 1–37 (MASSCPGTPSPAGLPPPSVATPGETLGPAAPPEPAFP) and 146–192 (ARGP…EQNK). 2 stretches are compositionally biased toward pro residues: residues 8 to 19 (TPSPAGLPPPSV) and 159 to 180 (APPPPSRSPRPALPATAPPGWP).

This is an uncharacterized protein from Homo sapiens (Human).